Consider the following 111-residue polypeptide: uncharacterized protein (111 aa).

2 consecutive transmembrane segments (helical) span residues 7 to 27 (ILNI…SMMI) and 53 to 73 (AFAM…TFLH).

Its subcellular location is the cell membrane. This is an uncharacterized protein from Bacillus anthracis.